We begin with the raw amino-acid sequence, 407 residues long: Argininosuccinate synthase (407 aa).

Residues 13–21 (AYSGGLDTS) and A40 each bind ATP. Positions 91 and 96 each coordinate L-citrulline. G121 is a binding site for ATP. L-aspartate-binding residues include T123, N127, and D128. Residue N127 participates in L-citrulline binding. L-citrulline is bound by residues R131, S182, S191, E267, and Y279.

The protein belongs to the argininosuccinate synthase family. Type 1 subfamily. In terms of assembly, homotetramer.

It localises to the cytoplasm. The enzyme catalyses L-citrulline + L-aspartate + ATP = 2-(N(omega)-L-arginino)succinate + AMP + diphosphate + H(+). Its pathway is amino-acid biosynthesis; L-arginine biosynthesis; L-arginine from L-ornithine and carbamoyl phosphate: step 2/3. This Mesorhizobium japonicum (strain LMG 29417 / CECT 9101 / MAFF 303099) (Mesorhizobium loti (strain MAFF 303099)) protein is Argininosuccinate synthase.